We begin with the raw amino-acid sequence, 133 residues long: Ribonuclease P protein component (133 aa).

This sequence belongs to the RnpA family. As to quaternary structure, consists of a catalytic RNA component (M1 or rnpB) and a protein subunit.

It catalyses the reaction Endonucleolytic cleavage of RNA, removing 5'-extranucleotides from tRNA precursor.. In terms of biological role, RNaseP catalyzes the removal of the 5'-leader sequence from pre-tRNA to produce the mature 5'-terminus. It can also cleave other RNA substrates such as 4.5S RNA. The protein component plays an auxiliary but essential role in vivo by binding to the 5'-leader sequence and broadening the substrate specificity of the ribozyme. The sequence is that of Ribonuclease P protein component from Synechococcus sp. (strain JA-2-3B'a(2-13)) (Cyanobacteria bacterium Yellowstone B-Prime).